The primary structure comprises 590 residues: Aspartate--tRNA(Asp/Asn) ligase (590 aa).

An L-aspartate-binding site is contributed by glutamate 175. Positions 199-202 (QQYK) are aspartate. 2 residues coordinate L-aspartate: arginine 221 and histidine 450. An ATP-binding site is contributed by 221–223 (RDE). Glutamate 484 provides a ligand contact to ATP. Arginine 491 lines the L-aspartate pocket. Residue 536–539 (GIDR) coordinates ATP.

Belongs to the class-II aminoacyl-tRNA synthetase family. Type 1 subfamily. In terms of assembly, homodimer.

It is found in the cytoplasm. It carries out the reaction tRNA(Asx) + L-aspartate + ATP = L-aspartyl-tRNA(Asx) + AMP + diphosphate. In terms of biological role, aspartyl-tRNA synthetase with relaxed tRNA specificity since it is able to aspartylate not only its cognate tRNA(Asp) but also tRNA(Asn). Reaction proceeds in two steps: L-aspartate is first activated by ATP to form Asp-AMP and then transferred to the acceptor end of tRNA(Asp/Asn). The protein is Aspartate--tRNA(Asp/Asn) ligase of Azorhizobium caulinodans (strain ATCC 43989 / DSM 5975 / JCM 20966 / LMG 6465 / NBRC 14845 / NCIMB 13405 / ORS 571).